Here is a 235-residue protein sequence, read N- to C-terminus: Purine nucleoside phosphorylase DeoD-type (235 aa).

H4 is a binding site for a purine D-ribonucleoside. Residues G20, R24, R43, and 87–90 (RVGT) contribute to the phosphate site. A purine D-ribonucleoside is bound by residues 179-181 (EME) and 203-204 (SN).

Belongs to the PNP/UDP phosphorylase family. In terms of assembly, homohexamer; trimer of homodimers.

It carries out the reaction a purine D-ribonucleoside + phosphate = a purine nucleobase + alpha-D-ribose 1-phosphate. It catalyses the reaction a purine 2'-deoxy-D-ribonucleoside + phosphate = a purine nucleobase + 2-deoxy-alpha-D-ribose 1-phosphate. Catalyzes the reversible phosphorolytic breakdown of the N-glycosidic bond in the beta-(deoxy)ribonucleoside molecules, with the formation of the corresponding free purine bases and pentose-1-phosphate. The sequence is that of Purine nucleoside phosphorylase DeoD-type from Levilactobacillus brevis (strain ATCC 367 / BCRC 12310 / CIP 105137 / JCM 1170 / LMG 11437 / NCIMB 947 / NCTC 947) (Lactobacillus brevis).